We begin with the raw amino-acid sequence, 467 residues long: Tripartite motif-containing protein 75 (467 aa).

The segment at 16–57 (CPICLDDLTDPVTVECGHNFCRSCIKDFWAGQQATSSCPVCR) adopts an RING-type zinc-finger fold. A B box-type zinc finger spans residues 90-131 (ESSTSCERHNQALTLFCEDDLQLLCDQCVEPESHGRHQVLSI). Residues Cys-95, His-98, Cys-117, and His-123 each coordinate Zn(2+). Positions 168 to 222 (VTLREQAEAQRSQLTSECEKLMRFLDQEERAAFSRLEDEEMRLEKRLLDNIAALE) form a coiled coil. In terms of domain architecture, B30.2/SPRY spans 276 to 466 (YSFPLQYSAL…LRLCSATDSE (191 aa)).

Belongs to the TRIM/RBCC family.

It localises to the cytoplasm. Its subcellular location is the cytoskeleton. The protein localises to the spindle. May play a role in female meiosis. This Mus musculus (Mouse) protein is Tripartite motif-containing protein 75.